The sequence spans 766 residues: Probable serine/threonine-protein kinase KKQ8 (766 aa).

5 disordered regions span residues 1–165 (MPEH…DTSS), 201–240 (GHYAPGFIQPPKSPTSSRVPSRSNSRKGREHAGTVSAAQL), 277–297 (SDANGNSHNHASKNDGHLDLP), 362–384 (TRSHVQSGSDDSSDDDEELDDPS), and 417–437 (AAKNKHNQSSKHRTPSGAGVQ). Low complexity predominate over residues 14–25 (RSLSLGSSMRSL). The span at 49–64 (VDIRVDTASASREHTP) shows a compositional bias: basic and acidic residues. Positions 94 to 120 (LTPTNSNPQSKSGSPVSQNTSQESLIT) are enriched in polar residues. Residues 127 to 137 (EDYRPSKDSRR) show a composition bias toward basic and acidic residues. Composition is skewed to polar residues over residues 140 to 165 (RNASPMSSNGNLPINANTVIGPDTSS) and 214 to 223 (PTSSRVPSRS). Positions 288-297 (SKNDGHLDLP) are enriched in basic and acidic residues. Positions 372–382 (DSSDDDEELDD) are enriched in acidic residues. Residues 419–430 (KNKHNQSSKHRT) are compositionally biased toward basic residues. Residues 449–752 (GKCVAVVGHG…IDKLLQTGWM (304 aa)) enclose the Protein kinase domain. Residues 455–463 (VGHGAYGVV) and lysine 493 contribute to the ATP site. Aspartate 603 functions as the Proton acceptor in the catalytic mechanism.

It belongs to the protein kinase superfamily. CAMK Ser/Thr protein kinase family. NPR/HAL subfamily. HAL5 sub-subfamily.

It localises to the cytoplasm. The enzyme catalyses L-seryl-[protein] + ATP = O-phospho-L-seryl-[protein] + ADP + H(+). The catalysed reaction is L-threonyl-[protein] + ATP = O-phospho-L-threonyl-[protein] + ADP + H(+). This is Probable serine/threonine-protein kinase KKQ8 (KKQ8) from Candida glabrata (strain ATCC 2001 / BCRC 20586 / JCM 3761 / NBRC 0622 / NRRL Y-65 / CBS 138) (Yeast).